The sequence spans 148 residues: 3-dehydroquinate dehydratase (148 aa).

Catalysis depends on Y23, which acts as the Proton acceptor. Substrate-binding residues include N75, H81, and D88. H101 acts as the Proton donor in catalysis. Substrate-binding positions include 102-103 (LS) and R112.

Belongs to the type-II 3-dehydroquinase family. Homododecamer.

It carries out the reaction 3-dehydroquinate = 3-dehydroshikimate + H2O. It participates in metabolic intermediate biosynthesis; chorismate biosynthesis; chorismate from D-erythrose 4-phosphate and phosphoenolpyruvate: step 3/7. Its function is as follows. Catalyzes a trans-dehydration via an enolate intermediate. The protein is 3-dehydroquinate dehydratase of Xylella fastidiosa (strain M23).